Reading from the N-terminus, the 273-residue chain is Thiazole synthase (273 aa).

Residue K110 is the Schiff-base intermediate with DXP of the active site. Residues G171, 197–198 (AG), and 219–220 (NT) contribute to the 1-deoxy-D-xylulose 5-phosphate site. Residues 251-273 (MAAQDSAQPSTPVLGTPFWHHAP) form a disordered region.

The protein belongs to the ThiG family. In terms of assembly, homotetramer. Forms heterodimers with either ThiH or ThiS.

The protein localises to the cytoplasm. The catalysed reaction is [ThiS sulfur-carrier protein]-C-terminal-Gly-aminoethanethioate + 2-iminoacetate + 1-deoxy-D-xylulose 5-phosphate = [ThiS sulfur-carrier protein]-C-terminal Gly-Gly + 2-[(2R,5Z)-2-carboxy-4-methylthiazol-5(2H)-ylidene]ethyl phosphate + 2 H2O + H(+). The protein operates within cofactor biosynthesis; thiamine diphosphate biosynthesis. In terms of biological role, catalyzes the rearrangement of 1-deoxy-D-xylulose 5-phosphate (DXP) to produce the thiazole phosphate moiety of thiamine. Sulfur is provided by the thiocarboxylate moiety of the carrier protein ThiS. In vitro, sulfur can be provided by H(2)S. The polypeptide is Thiazole synthase (Variovorax paradoxus (strain S110)).